The following is a 701-amino-acid chain: Type 3 secretion system secretin (701 aa).

The N-terminal stretch at 1–21 (MRKALMWLPLLLIGLSPATWA) is a signal peptide. Over residues 229–238 (RGNGLAGGGS) the composition is skewed to gly residues. The interval 229 to 252 (RGNGLAGGGSPDTPSLPMSSSGLD) is disordered. Residues 240–252 (DTPSLPMSSSGLD) are compositionally biased toward polar residues.

Belongs to the bacterial secretin family. T3SS SctC subfamily. As to quaternary structure, the core secretion machinery of the T3SS is composed of approximately 20 different proteins, including cytoplasmic components, a base, an export apparatus and a needle. This subunit is part of the base, which anchors the injectisome in the bacterial cell envelope. Forms a stable homooligomeric complex.

The protein resides in the cell outer membrane. Its function is as follows. Component of the type III secretion system (T3SS), also called injectisome, which is used to inject bacterial effector proteins into eukaryotic host cells. Forms a ring-shaped multimeric structure with an apparent central pore in the outer membrane. Involved in the secretion of a proteinaceous elicitor of the hypersensitivity response in plants. This Pseudomonas syringae pv. syringae protein is Type 3 secretion system secretin.